The primary structure comprises 133 residues: Putative redox protein FMP46, mitochondrial (133 aa).

The N-terminal 21 residues, 1–21 (MSFWKTLQRQPRTISLFTNDI), are a transit peptide targeting the mitochondrion. The active site involves cysteine 97.

It belongs to the FMP46 family.

The protein resides in the mitochondrion. In terms of biological role, putative mitochondrial redox protein which could be involved in the reduction of small toxic molecules. This is Putative redox protein FMP46, mitochondrial (FMP46) from Saccharomyces cerevisiae (strain ATCC 204508 / S288c) (Baker's yeast).